Here is a 395-residue protein sequence, read N- to C-terminus: Pyridinium-3,5-bisthiocarboxylic acid mononucleotide nickel insertion protein (395 aa).

It belongs to the LarC family.

The catalysed reaction is Ni(II)-pyridinium-3,5-bisthiocarboxylate mononucleotide = pyridinium-3,5-bisthiocarboxylate mononucleotide + Ni(2+). Its function is as follows. Involved in the biosynthesis of a nickel-pincer cofactor ((SCS)Ni(II) pincer complex). Binds Ni(2+), and functions in nickel delivery to pyridinium-3,5-bisthiocarboxylic acid mononucleotide (P2TMN), to form the mature cofactor. Is thus probably required for the activation of nickel-pincer cofactor-dependent enzymes. This is Pyridinium-3,5-bisthiocarboxylic acid mononucleotide nickel insertion protein from Staphylococcus epidermidis (strain ATCC 35984 / DSM 28319 / BCRC 17069 / CCUG 31568 / BM 3577 / RP62A).